The following is an 899-amino-acid chain: 1,4-alpha-glucan-branching enzyme 3, chloroplastic/amyloplastic (899 aa).

Residues Met-1–Arg-49 constitute a chloroplast transit peptide. The disordered stretch occupies residues Arg-47–Ala-67. Glu-612 serves as the catalytic Proton donor.

Belongs to the glycosyl hydrolase 13 family. GlgB subfamily. Monomer. As to expression, mostly expressed in flowers and inflorescence, and, to a lower extent, in seedlings, roots, stems, leaves, siliques and seeds.

Its subcellular location is the plastid. The protein resides in the chloroplast stroma. The protein localises to the amyloplast. The enzyme catalyses Transfers a segment of a (1-&gt;4)-alpha-D-glucan chain to a primary hydroxy group in a similar glucan chain.. It functions in the pathway glycan biosynthesis; starch biosynthesis. In terms of biological role, catalyzes the formation of the alpha-1,6-glucosidic linkages in starch by scission of a 1,4-alpha-linked oligosaccharide from growing alpha-1,4-glucan chains and the subsequent attachment of the oligosaccharide to the alpha-1,6 position. Essential during embryogenesis. This Arabidopsis thaliana (Mouse-ear cress) protein is 1,4-alpha-glucan-branching enzyme 3, chloroplastic/amyloplastic (SBE3).